We begin with the raw amino-acid sequence, 124 residues long: Glucagon-1 (124 aa).

A signal peptide spans 1 to 25; sequence MKRIHSLAGILLVLGLIQSSCRVLM. Residues 28-54 are disordered; sequence ADPSSSLEADSTLKDEPRELSNMKRHS. Residues 38–54 are compositionally biased toward basic and acidic residues; sequence STLKDEPRELSNMKRHS. The propeptide occupies 84-88; it reads SGVAE.

Belongs to the glucagon family.

It localises to the secreted. Glucagon plays a key role in glucose metabolism and homeostasis. Regulates blood glucose by increasing gluconeogenesis and decreasing glycolysis. The chain is Glucagon-1 (gcg1) from Lophius americanus (American angler).